The following is a 200-amino-acid chain: Thymidine kinase (200 aa).

Residues 15–22 and 88–91 contribute to the ATP site; these read GPMYSGKS and DEVQ. Glu-89 (proton acceptor) is an active-site residue. Residues Cys-145, Cys-148, Cys-177, and Cys-180 each coordinate Zn(2+).

The protein belongs to the thymidine kinase family. As to quaternary structure, homotetramer.

The protein resides in the cytoplasm. The catalysed reaction is thymidine + ATP = dTMP + ADP + H(+). The polypeptide is Thymidine kinase (Mycoplasma mobile (strain ATCC 43663 / 163K / NCTC 11711) (Mesomycoplasma mobile)).